The primary structure comprises 270 residues: Probable inner membrane protein BTH_II0599 (270 aa).

Transmembrane regions (helical) follow at residues 24–44 (RNPLAFVTLFFTYLLAMMLVS), 45–65 (LVPVIGAALPLLLIPGIAVGF), 98–118 (LLTLGGLYIVSMAAVFACSAL), 150–170 (ALIAAALYAPVAMMFWFAPVL), 198–218 (VYGLLWFALALGVSFGLAALM), and 226–246 (YALMVMMPASIVITAMLYCSF).

Its subcellular location is the cell inner membrane. Functionally, (Microbial infection) Probably transports the toxic C-terminal region of CdiA-2 from B.pseudomallei strain 1026b across the inner membrane to the cytoplasm, where CdiA has a toxic effect. Expression in E.coli makes the bacteria sensitive to the tRNase domain of B.pseudomallei strain 1026b CdiA-2. The protein is Probable inner membrane protein BTH_II0599 of Burkholderia thailandensis (strain ATCC 700388 / DSM 13276 / CCUG 48851 / CIP 106301 / E264).